Consider the following 914-residue polypeptide: MFPVFSGCFQELQEKNKSLELVSFEEVAVHFTWEEWQDLDDAQRTLYRDVMLETYSSLVSLGHYITKPEMIFKLEQGAEPWIVEETPNLRLSAVQIIDDLIERSHESHDRFFWQIVITNSNTSTQERVELGKTFNLNSNHVLNLIINNGNSSGMKPGQFNDCQNMLFPIKPGETQSGEKPHVCDITRRSHRHHEHLTQHHKIQTLLQTFQCNEQGKTFNTEAMFFIHKRVHIVQTFGKYNEYEKACNNSAVIVQVITQVGQPTCCRKSDFTKHQQTHTGEKPYECVECEKPSISKSDLMLQCKMPTEEKPYACNWCEKLFSYKSSLIIHQRIHTGEKPYGCNECGKTFRRKSFLTLHERTHTGDKPYKCIECGKTFHCKSLLTLHHRTHSGEKPYQCSECGKTFSQKSYLTIHHRTHTGEKPYACDHCEEAFSHKSRLTVHQRTHTGEKPYECNECGKPFINKSNLRLHQRTHTGEKPYECNECGKTFHRKSFLTIHQWTHTGEKPYECNECGKTFRCKSFLTVHQRTHAGEKPYACNECGKTYSHKSYLTVHHRTHTGEKPYECNECGKSFHCKSFLTIHQRTHAGKKPYECNECEKTFINKLNLGIHKRTHTGERPYECNECGKTFRQKSNLSTHQGTHTGEKPYVCNECGKTFHRKSFLTIHQRTHTGKNRMDVMNVEKLFVRNHTLLYIRELTPGKSPMNVMNVENPFIRRQIFRSIKVFTRGRNPMNVANVEKPCQKSVLTVHHRTHTGEKPYECNECGKTFCHKSNLSTHQGTHSGEKPYECDECRKTFYDKTVLTIHQRTHTGEKPFECKECRKTFSQKSKLFVHHRTHTGEKPFRCNECRKTFSQKSGLSIHQRTHTGEKPYECKECGKTFCQKSHLSRHQQTHIGEKSDVAEAGYVFPQNHSFFP.

In terms of domain architecture, KRAB spans 22 to 93 (VSFEEVAVHF…EETPNLRLSA (72 aa)). A C2H2-type 1; degenerate zinc finger spans residues 209–231 (FQCNEQGKTFNTEAMFFIHKRVH). The C2H2-type 2; degenerate zinc-finger motif lies at 266–277 (RKSDFTKHQQTH). Residues 283 to 305 (YECVECEKPSISKSDLMLQCKMP) form a C2H2-type 3; degenerate zinc finger. 12 C2H2-type zinc fingers span residues 311–333 (YACN…QRIH), 339–361 (YGCN…ERTH), 367–389 (YKCI…HRTH), 395–417 (YQCS…HRTH), 423–445 (YACD…QRTH), 451–473 (YECN…QRTH), 479–501 (YECN…QWTH), 507–529 (YECN…QRTH), 535–557 (YACN…HRTH), 563–585 (YECN…QRTH), 591–613 (YECN…KRTH), and 619–641 (YECN…QGTH). The C2H2-type 16; degenerate zinc-finger motif lies at 649–669 (CNECGKTFHRKSFLTIHQRTH). The C2H2-type 17; degenerate zinc-finger motif lies at 741–752 (QKSVLTVHHRTH). C2H2-type zinc fingers lie at residues 758–780 (YECN…QGTH), 786–808 (YECD…QRTH), 814–836 (FECK…HRTH), 842–864 (FRCN…QRTH), and 870–892 (YECK…QQTH).

This sequence belongs to the krueppel C2H2-type zinc-finger protein family.

The protein localises to the nucleus. In terms of biological role, may be involved in transcriptional regulation. In Homo sapiens (Human), this protein is Zinc finger protein 717.